We begin with the raw amino-acid sequence, 210 residues long: Thymidylate kinase (210 aa).

10–17 (GPEGAGKS) is a binding site for ATP.

It belongs to the thymidylate kinase family.

The enzyme catalyses dTMP + ATP = dTDP + ADP. Functionally, phosphorylation of dTMP to form dTDP in both de novo and salvage pathways of dTTP synthesis. This Pseudomonas fluorescens (strain Pf0-1) protein is Thymidylate kinase.